Here is a 148-residue protein sequence, read N- to C-terminus: Ribonuclease H (148 aa).

The RNase H type-1 domain maps to 1–141 (MKTVEIYTDG…ADELANLGVK (141 aa)). Aspartate 9, glutamate 47, aspartate 69, and aspartate 133 together coordinate Mg(2+).

Belongs to the RNase H family. In terms of assembly, monomer. Mg(2+) serves as cofactor.

Its subcellular location is the cytoplasm. It carries out the reaction Endonucleolytic cleavage to 5'-phosphomonoester.. Its function is as follows. Endonuclease that specifically degrades the RNA of RNA-DNA hybrids. This is Ribonuclease H from Hahella chejuensis (strain KCTC 2396).